The sequence spans 633 residues: Basic helix-loop-helix ARNT-like protein 1 (633 aa).

The tract at residues 1–65 (MADQRMDISS…GMDTDKDDQH (65 aa)) is disordered. Position 17 is a phosphoserine; by GSK3-beta (Ser17). Positions 24–33 (ISSSLSTSGM) are enriched in polar residues. Residues 36 to 41 (NRKRKG) carry the Nuclear localization signal motif. The bHLH domain occupies 79–132 (NAREAHSQIEKRRRDKMNSFIDELASLVPTCNAMSRKLDKLTVLRMAVQHMKTL). Ser85 is modified (phosphoserine). Position 97 is a phosphoserine; by CK2 (Ser97). The short motif at 149–159 (LSDDELKHLIL) is the Nuclear export signal 1 element. The PAS 1 domain maps to 150–222 (SDDELKHLIL…EQLSSSDTAP (73 aa)). Lys259 participates in a covalent cross-link: Glycyl lysine isopeptide (Lys-Gly) (interchain with G-Cter in SUMO2 and SUMO3). A Glycyl lysine isopeptide (Lys-Gly) (interchain with G-Cter in SUMO) cross-link involves residue Lys266. Residues 333 to 403 (PQPVNGEIRV…ECHRQVLQTR (71 aa)) enclose the PAS 2 domain. The Nuclear export signal 2 motif lies at 368 to 376 (LAYLPQELL). The PAC domain maps to 408-451 (TNCYKFKIKDGSFITLRSRWFSFMNPWTKEVEYIVSTNTVVSTN). 2 disordered regions span residues 472-499 (SVLQ…RAGA) and 518-555 (GSSP…TPDI). Low complexity predominate over residues 518 to 528 (GSSPSSCGSSP). Lys545 is subject to N6-acetyllysine.

In terms of assembly, component of the circadian clock oscillator which includes the CRY1/2 proteins, CLOCK or NPAS2, BMAL1 or BMAL2, CSNK1D and/or CSNK1E, TIMELESS and the PER1/2/3 proteins. Forms a heterodimer with CLOCK. The CLOCK-BMAL1 heterodimer is required for E-box-dependent transactivation, for CLOCK nuclear translocation and degradation, and, for phosphorylation of both CLOCK and BMAL1. Interacts with PER1, PER2, CRY1 and CRY2 and this interaction requires a translocation to the nucleus. Interaction of the CLOCK-BMAL1 heterodimer with PER or CRY inhibits transcription activation. Post-translationally, ubiquitinated, leading to its proteasomal degradation. Deubiquitinated by USP9X. O-glycosylated; contains O-GlcNAc. O-glycosylation by OGT prevents protein degradation by inhibiting ubiquitination. It also stabilizes the CLOCK-BMAL1 heterodimer thereby increasing CLOCK-BMAL1-mediated transcription of genes in the negative loop of the circadian clock such as PER1/2/3 and CRY1/2. In terms of processing, acetylated on Lys-545 by CLOCK during the repression phase of the circadian cycle. Acetylation facilitates recruitment of CRY1 protein and initiates the repression phase of the circadian cycle. Acetylated at Lys-545 by KAT5 during the activation phase of the cycle, leading to recruitment of the positive transcription elongation factor b (P-TEFb) and BRD4, followed by productive elongation of circadian transcripts. Deacetylated by SIRT1, which may result in decreased protein stability. Post-translationally, phosphorylated upon dimerization with CLOCK. Phosphorylation enhances the transcriptional activity, alters the subcellular localization and decreases the stability of the CLOCK-BMAL1 heterodimer by promoting its degradation. Phosphorylation shows circadian variations in the liver with a peak between CT10 to CT14. Phosphorylation at Ser-97 by CK2 is essential for its nuclear localization, its interaction with CLOCK and controls CLOCK nuclear entry. Dephosphorylation at Ser-85 is important for dimerization with CLOCK and transcriptional activity. Sumoylated on Lys-266 upon dimerization with CLOCK. Predominantly conjugated to poly-SUMO2/3 rather than SUMO1 and the level of these conjugates undergo rhythmic variation, peaking at CT9-CT12. Sumoylation localizes it exclusively to the PML body and promotes its ubiquitination in the PML body, ubiquitin-dependent proteasomal degradation and the transcriptional activity of the CLOCK-BMAL1 heterodimer. In terms of processing, undergoes lysosome-mediated degradation in a time-dependent manner in the liver.

The protein resides in the nucleus. It localises to the cytoplasm. The protein localises to the PML body. In terms of biological role, transcriptional activator which forms a core component of the circadian clock. The circadian clock, an internal time-keeping system, regulates various physiological processes through the generation of approximately 24 hour circadian rhythms in gene expression, which are translated into rhythms in metabolism and behavior. It is derived from the Latin roots 'circa' (about) and 'diem' (day) and acts as an important regulator of a wide array of physiological functions including metabolism, sleep, body temperature, blood pressure, endocrine, immune, cardiovascular, and renal function. Consists of two major components: the central clock, residing in the suprachiasmatic nucleus (SCN) of the brain, and the peripheral clocks that are present in nearly every tissue and organ system. Both the central and peripheral clocks can be reset by environmental cues, also known as Zeitgebers (German for 'timegivers'). The predominant Zeitgeber for the central clock is light, which is sensed by retina and signals directly to the SCN. The central clock entrains the peripheral clocks through neuronal and hormonal signals, body temperature and feeding-related cues, aligning all clocks with the external light/dark cycle. Circadian rhythms allow an organism to achieve temporal homeostasis with its environment at the molecular level by regulating gene expression to create a peak of protein expression once every 24 hours to control when a particular physiological process is most active with respect to the solar day. Transcription and translation of core clock components (CLOCK, NPAS2, BMAL1, BMAL2, PER1, PER2, PER3, CRY1 and CRY2) plays a critical role in rhythm generation, whereas delays imposed by post-translational modifications (PTMs) are important for determining the period (tau) of the rhythms (tau refers to the period of a rhythm and is the length, in time, of one complete cycle). A diurnal rhythm is synchronized with the day/night cycle, while the ultradian and infradian rhythms have a period shorter and longer than 24 hours, respectively. Disruptions in the circadian rhythms contribute to the pathology of cardiovascular diseases, cancer, metabolic syndromes and aging. A transcription/translation feedback loop (TTFL) forms the core of the molecular circadian clock mechanism. Transcription factors, CLOCK or NPAS2 and BMAL1 or BMAL2, form the positive limb of the feedback loop, act in the form of a heterodimer and activate the transcription of core clock genes and clock-controlled genes (involved in key metabolic processes), harboring E-box elements (5'-CACGTG-3') within their promoters. The core clock genes: PER1/2/3 and CRY1/2 which are transcriptional repressors form the negative limb of the feedback loop and interact with the CLOCK|NPAS2-BMAL1|BMAL2 heterodimer inhibiting its activity and thereby negatively regulating their own expression. This heterodimer also activates nuclear receptors NR1D1/2 and RORA/B/G, which form a second feedback loop and which activate and repress BMAL1 transcription, respectively. The preferred binding motif for the CLOCK-BMAL1 heterodimer is 5'-CACGTGA-3', which contains a flanking adenine nucleotide at the 3-prime end of the canonical 6-nucleotide E-box sequence. CLOCK specifically binds to the half-site 5'-CAC-3', while BMAL1 binds to the half-site 5'-GTGA-3'. Essential for the rhythmic interaction of CLOCK with ASS1 and plays a critical role in positively regulating CLOCK-mediated acetylation of ASS1. Plays a role in protecting against lethal sepsis by limiting the expression of immune checkpoint protein CD274 in macrophages in a PKM2-dependent manner. This Tyto alba (Barn owl) protein is Basic helix-loop-helix ARNT-like protein 1 (BMAL1).